Here is an 89-residue protein sequence, read N- to C-terminus: Small ribosomal subunit protein uS15 (89 aa).

The protein belongs to the universal ribosomal protein uS15 family. As to quaternary structure, part of the 30S ribosomal subunit. Forms a bridge to the 50S subunit in the 70S ribosome, contacting the 23S rRNA.

Its function is as follows. One of the primary rRNA binding proteins, it binds directly to 16S rRNA where it helps nucleate assembly of the platform of the 30S subunit by binding and bridging several RNA helices of the 16S rRNA. In terms of biological role, forms an intersubunit bridge (bridge B4) with the 23S rRNA of the 50S subunit in the ribosome. The chain is Small ribosomal subunit protein uS15 from Azobacteroides pseudotrichonymphae genomovar. CFP2.